Here is a 562-residue protein sequence, read N- to C-terminus: Tetratricopeptide repeat protein 34 (562 aa).

The tract at residues 1–30 (MLHKKPQRANENGISQRKKPSDQDNSSVKE) is disordered. The segment covering 19-30 (KPSDQDNSSVKE) has biased composition (basic and acidic residues). 8 TPR repeats span residues 51-84 (DVSR…SSQR), 175-208 (KDSL…EPYN), 210-242 (EALS…DASY), 304-337 (AHFH…NAID), 388-421 (FQAA…SNNN), 423-455 (KYLR…HSSH), 461-494 (AEDY…EHAS), and 509-542 (AGIF…DENN).

The sequence is that of Tetratricopeptide repeat protein 34 (ttc34) from Xenopus laevis (African clawed frog).